The sequence spans 114 residues: Cystatin Pr15a (114 aa).

A signal peptide spans 1–22; sequence MFTVKLLAFMVVAVSLQHLAEA. In terms of domain architecture, Cystatin spans 29-83; that stretch reads GCPVEVDPNREDIKKSLAHVMAAKNSPDELVRIIKASTQVVNGIKYKVVFEVKNP.

It belongs to the cystatin family. As to expression, expressed by the venom gland (anterior main gland) (at protein level).

Its subcellular location is the secreted. The chain is Cystatin Pr15a from Platymeris rhadamanthus (Red spot assassin bug).